Here is a 175-residue protein sequence, read N- to C-terminus: Peptide deformylase 1 (175 aa).

Fe cation-binding residues include Cys-99 and His-141. The active site involves Glu-142. His-145 is a Fe cation binding site.

The protein belongs to the polypeptide deformylase family. The cofactor is Fe(2+).

The enzyme catalyses N-terminal N-formyl-L-methionyl-[peptide] + H2O = N-terminal L-methionyl-[peptide] + formate. Functionally, removes the formyl group from the N-terminal Met of newly synthesized proteins. Requires at least a dipeptide for an efficient rate of reaction. N-terminal L-methionine is a prerequisite for activity but the enzyme has broad specificity at other positions. This chain is Peptide deformylase 1, found in Rickettsia conorii (strain ATCC VR-613 / Malish 7).